The primary structure comprises 244 residues: Putative esophageal gland cell secretory protein 6 (244 aa).

Positions 1–22 (MDRRFTVFLVIALVTSIYEVLS) are cleaved as a signal peptide. An intrachain disulfide couples Cys-88 to Cys-91.

This sequence belongs to the SelWTH family. SELT subfamily.

The protein is Putative esophageal gland cell secretory protein 6 (HSP6) of Heterodera glycines (Soybean cyst nematode worm).